Here is a 516-residue protein sequence, read N- to C-terminus: Coiled-coil domain-containing protein 82 (516 aa).

Residues 1 to 13 (MVHARRHETRKNS) show a composition bias toward basic residues. Residues 1–265 (MVHARRHETR…DYGDAENEDD (265 aa)) form a disordered region. Positions 38-62 (DSDEELDSDEEIGSDEDLDGGESID) are enriched in acidic residues. The span at 78–96 (IPEKETELNLIKVESERSN) shows a compositional bias: basic and acidic residues. The segment covering 98–107 (KCHMNTSSSS) has biased composition (polar residues). Residues 113-135 (MNKTKHNDLPDDEAHPGQAEGHH) show a composition bias toward basic and acidic residues. Phosphoserine occurs at positions 170 and 194. At Thr202 the chain carries Phosphothreonine. Residues 204 to 232 (EKSPAARKREYHQKLQELCERSRQKQRHN) are a coiled coil. A compositionally biased stretch (basic and acidic residues) spans 215 to 226 (HQKLQELCERSR). Over residues 248 to 265 (TDEDEDDDDYGDAENEDD) the composition is skewed to acidic residues. Position 301 is a phosphoserine (Ser301).

This Rattus norvegicus (Rat) protein is Coiled-coil domain-containing protein 82 (Ccdc82).